A 336-amino-acid chain; its full sequence is uncharacterized protein (336 aa).

NADP(+)-binding residues include Lys-39 and Tyr-166.

The protein belongs to the NAD(P)-dependent epimerase/dehydratase family. Dihydroflavonol-4-reductase subfamily.

It localises to the cytoplasm. It is found in the nucleus. This is an uncharacterized protein from Schizosaccharomyces pombe (strain 972 / ATCC 24843) (Fission yeast).